A 399-amino-acid polypeptide reads, in one-letter code: Methylthioribose kinase (399 aa).

Residues Asn-40, Lys-57, and 111 to 113 each bind ATP; that span reads EDL. Asp-229 serves as a coordination point for substrate. 246 to 248 is a binding site for ATP; that stretch reads DAE. Arg-344 is a binding site for substrate.

This sequence belongs to the methylthioribose kinase family. In terms of assembly, homodimer.

The enzyme catalyses 5-(methylsulfanyl)-D-ribose + ATP = 5-(methylsulfanyl)-alpha-D-ribose 1-phosphate + ADP + H(+). It functions in the pathway amino-acid biosynthesis; L-methionine biosynthesis via salvage pathway; S-methyl-5-thio-alpha-D-ribose 1-phosphate from S-methyl-5'-thioadenosine (hydrolase route): step 2/2. In terms of biological role, catalyzes the phosphorylation of methylthioribose into methylthioribose-1-phosphate. This chain is Methylthioribose kinase, found in Yersinia enterocolitica serotype O:8 / biotype 1B (strain NCTC 13174 / 8081).